A 93-amino-acid chain; its full sequence is UPF0223 protein gbs1030 (93 aa).

Belongs to the UPF0223 family.

In Streptococcus agalactiae serotype III (strain NEM316), this protein is UPF0223 protein gbs1030.